Consider the following 316-residue polypeptide: MANLKDIRDRIVSVKNTRKITEAMRLVAAAKVRRAQDQVLRSRPFADRLARVLENIQSRMQFEAADSPLLNKREVKTITLLAVTGDRGLCGGYNANIIKRTEKRYAELKGQGYSPDLVLIGKKAIGYFENRSSLYNIRATFKELEQVPTSEDAASITSEVLAEFLSESTDRVEVIFTKFVSLVSCNPTIQTLLPLDPQGIADSEDEIFRLTTKDSQLIIEKDAAPTNEEPKLPSDIVFEQSPDQLLNALLPLYLQNQLLRALQESAASELASRMTAMNNASDNAKELAKNLTIDYNKARQAAITQEILEVVGGASA.

Belongs to the ATPase gamma chain family. In terms of assembly, F-type ATPases have 2 components, CF(1) - the catalytic core - and CF(0) - the membrane proton channel. CF(1) has five subunits: alpha(3), beta(3), gamma(1), delta(1), epsilon(1). CF(0) has three main subunits: a, b and c.

The protein localises to the cellular thylakoid membrane. Its function is as follows. Produces ATP from ADP in the presence of a proton gradient across the membrane. The gamma chain is believed to be important in regulating ATPase activity and the flow of protons through the CF(0) complex. This chain is ATP synthase gamma chain, found in Prochlorococcus marinus (strain NATL1A).